The chain runs to 327 residues: Undecaprenyl-phosphate 4-deoxy-4-formamido-L-arabinose transferase (327 aa).

The Cytoplasmic segment spans residues 1–235 (MFDAAPIKKV…TCLTTTPLRL (235 aa)). Residues 236 to 256 (LSLLGSVIAIGGFSLSVLLIV) form a helical membrane-spanning segment. Residues 257–269 (LRLALGPQWAAEG) lie on the Periplasmic side of the membrane. The helical transmembrane segment at 270 to 290 (VFMLFAVLFTFIGAQFIGMGL) threads the bilayer. Residues 291–327 (LGEYIGRIYNDVRARPRYFVQQVIYPESTSFTEESHQ) lie on the Cytoplasmic side of the membrane.

This sequence belongs to the glycosyltransferase 2 family.

The protein resides in the cell inner membrane. The enzyme catalyses UDP-4-deoxy-4-formamido-beta-L-arabinose + di-trans,octa-cis-undecaprenyl phosphate = 4-deoxy-4-formamido-alpha-L-arabinopyranosyl di-trans,octa-cis-undecaprenyl phosphate + UDP. The protein operates within glycolipid biosynthesis; 4-amino-4-deoxy-alpha-L-arabinose undecaprenyl phosphate biosynthesis; 4-amino-4-deoxy-alpha-L-arabinose undecaprenyl phosphate from UDP-4-deoxy-4-formamido-beta-L-arabinose and undecaprenyl phosphate: step 1/2. Its pathway is bacterial outer membrane biogenesis; lipopolysaccharide biosynthesis. Functionally, catalyzes the transfer of 4-deoxy-4-formamido-L-arabinose from UDP to undecaprenyl phosphate. The modified arabinose is attached to lipid A and is required for resistance to polymyxin and cationic antimicrobial peptides. This is Undecaprenyl-phosphate 4-deoxy-4-formamido-L-arabinose transferase from Salmonella newport (strain SL254).